The following is a 721-amino-acid chain: MTQSSPLKTQQMQVGGMDCTSCKLKIEGSLERLKGVAEASVTVATGRLTVTYDPKQVSEITIQERIAALGYTLAEPKSSVTLNGHKHPHSHREEGHSHSHGAGEFNLKQELLPVLTAIALFTIAILFEQPLHNTPGQIAEFAVIIPAYLLSGWTVLKTAGRNILRGQIFDENFLMTIATLGALAIHQLPEAVAVMLFFRVGELFQEYSVGRSRRSIKALLEARPDTANLKRNGTVQQVSPETVQVDDLILVKPGEKVPLDGEILGGTSQVDTSALTGESVPGTVKPGDTILAGMINQSGVLTIRVTKLFSESSIAKVLDLVENASSKKASTEKFITQFARYYTPVIVFLSLAVALLPPLFIPGADRADWVYRALVLLVISCPCGLVISIPLGYFGGIGGAAKHGILIKGSTFLDSLTAVKTVVFDKTGTLTKGTFKVTQVVTKNGFSESELLTLAAKAESHSTHPIALSIREAYAQSIADSEVADYEEIAGHGIRAVVQNQVVIAGNDRLLHREKIDHDTCDVAGTVVHLAVDGRYGGYILIADEIKEDAVQAIRDLKRMGVEKTVMLTGDSEIVAQSVAQQIGLDAFVAELLPEEKVDEIEQLLDPSGKAKLAFVGDGINDAPVIARADVGIAMGGLGSDAAIETADVVLMTDAPSKVAEAIHVARKTRQIVVQNIVLALGIKALFIALGTIGLATLWEAVFADVGVALLAILNATRIAK.

Residues 1–107 lie on the Cytoplasmic side of the membrane; it reads MTQSSPLKTQ…HSHGAGEFNL (107 aa). The region spanning 8–74 is the HMA domain; it reads KTQQMQVGGM…RIAALGYTLA (67 aa). Residues C19 and C22 each contribute to the Zn(2+) site. Residues 80-101 form a disordered region; it reads VTLNGHKHPHSHREEGHSHSHG. Residues 108–128 form a helical membrane-spanning segment; sequence KQELLPVLTAIALFTIAILFE. The Extracellular segment spans residues 129 to 140; it reads QPLHNTPGQIAE. Residues 141-160 form a helical membrane-spanning segment; the sequence is FAVIIPAYLLSGWTVLKTAG. At 161–167 the chain is on the cytoplasmic side; it reads RNILRGQ. The helical transmembrane segment at 168–187 threads the bilayer; that stretch reads IFDENFLMTIATLGALAIHQ. The Extracellular portion of the chain corresponds to 188–190; it reads LPE. A helical transmembrane segment spans residues 191-210; the sequence is AVAVMLFFRVGELFQEYSVG. The Cytoplasmic portion of the chain corresponds to 211-344; sequence RSRRSIKALL…ITQFARYYTP (134 aa). A helical membrane pass occupies residues 345–363; that stretch reads VIVFLSLAVALLPPLFIPG. At 364-369 the chain is on the extracellular side; it reads ADRADW. Residues 370-387 form a helical membrane-spanning segment; the sequence is VYRALVLLVISCPCGLVI. At 388–671 the chain is on the cytoplasmic side; that stretch reads SIPLGYFGGI…AIHVARKTRQ (284 aa). The active-site 4-aspartylphosphate intermediate is the D425. Positions 618 and 622 each coordinate Mg(2+). A helical transmembrane segment spans residues 672–693; the sequence is IVVQNIVLALGIKALFIALGTI. Residues 694-701 lie on the Extracellular side of the membrane; that stretch reads GLATLWEA. The chain crosses the membrane as a helical span at residues 702–717; it reads VFADVGVALLAILNAT. Residues 718 to 721 are Cytoplasmic-facing; the sequence is RIAK.

It belongs to the cation transport ATPase (P-type) (TC 3.A.3) family. Type IB subfamily.

Its subcellular location is the cell membrane. The enzyme catalyses Zn(2+)(in) + ATP + H2O = Zn(2+)(out) + ADP + phosphate + H(+). The sequence is that of Zinc-transporting ATPase (ziaA) from Synechocystis sp. (strain ATCC 27184 / PCC 6803 / Kazusa).